The chain runs to 396 residues: Phosphoglycerate kinase (396 aa).

Residues 21–23 (DFN), Arg-37, 60–63 (HLGR), Arg-121, and Arg-154 each bind substrate. Residues Lys-205, Gly-296, Glu-327, and 353-356 (GGDS) contribute to the ATP site.

It belongs to the phosphoglycerate kinase family. Monomer.

Its subcellular location is the cytoplasm. It catalyses the reaction (2R)-3-phosphoglycerate + ATP = (2R)-3-phospho-glyceroyl phosphate + ADP. The protein operates within carbohydrate degradation; glycolysis; pyruvate from D-glyceraldehyde 3-phosphate: step 2/5. The protein is Phosphoglycerate kinase of Anaeromyxobacter sp. (strain Fw109-5).